The chain runs to 191 residues: MNDYTKYTIGVLSLQGAVSEHIAQIETLGAKAIAVKSLSELQQVDALVLPGGESTAMRRLMHSSGLFQALKSFDKPILGTCAGLILLANKLEGGEPPHLAKMNIQVQRNAFGRQVDSFQTDLMIKGFADSFPAVFIRAPYISRIGSEVEVLAEWQGNVVFAKQGNLLACAFHPELTSDTRVVELFLQQLKE.

52 to 54 (GES) is a binding site for L-glutamine. Catalysis depends on Cys81, which acts as the Nucleophile. Residues Arg108 and 136–137 (IR) each bind L-glutamine. Catalysis depends on charge relay system residues His172 and Glu174.

Belongs to the glutaminase PdxT/SNO family. As to quaternary structure, in the presence of PdxS, forms a dodecamer of heterodimers. Only shows activity in the heterodimer.

It carries out the reaction aldehydo-D-ribose 5-phosphate + D-glyceraldehyde 3-phosphate + L-glutamine = pyridoxal 5'-phosphate + L-glutamate + phosphate + 3 H2O + H(+). The enzyme catalyses L-glutamine + H2O = L-glutamate + NH4(+). It participates in cofactor biosynthesis; pyridoxal 5'-phosphate biosynthesis. Catalyzes the hydrolysis of glutamine to glutamate and ammonia as part of the biosynthesis of pyridoxal 5'-phosphate. The resulting ammonia molecule is channeled to the active site of PdxS. The protein is Pyridoxal 5'-phosphate synthase subunit PdxT of Actinobacillus pleuropneumoniae serotype 5b (strain L20).